The sequence spans 201 residues: Proteasome subunit beta type-2 (201 aa).

The residue at position 1 (methionine 1) is an N-acetylmethionine.

The protein belongs to the peptidase T1B family. In terms of assembly, the 26S proteasome consists of a 20S proteasome core and two 19S regulatory subunits. The 20S proteasome core is a barrel-shaped complex made of 28 subunits that are arranged in four stacked rings. The two outer rings are each formed by seven alpha subunits, and the two inner rings are formed by seven beta subunits. The proteolytic activity is exerted by three beta-subunits PSMB5, PSMB6 and PSMB7. As to quaternary structure, (Microbial infection) Interacts with HIV-1 protein Tat.

It localises to the cytoplasm. Its subcellular location is the nucleus. Its function is as follows. Non-catalytic component of the 20S core proteasome complex involved in the proteolytic degradation of most intracellular proteins. This complex plays numerous essential roles within the cell by associating with different regulatory particles. Associated with two 19S regulatory particles, forms the 26S proteasome and thus participates in the ATP-dependent degradation of ubiquitinated proteins. The 26S proteasome plays a key role in the maintenance of protein homeostasis by removing misfolded or damaged proteins that could impair cellular functions, and by removing proteins whose functions are no longer required. Associated with the PA200 or PA28, the 20S proteasome mediates ubiquitin-independent protein degradation. This type of proteolysis is required in several pathways including spermatogenesis (20S-PA200 complex) or generation of a subset of MHC class I-presented antigenic peptides (20S-PA28 complex). This is Proteasome subunit beta type-2 from Homo sapiens (Human).